Here is a 441-residue protein sequence, read N- to C-terminus: MVKYIIKALVEVDGPVDEHDIIGAIFGQTEGLLDDFDLRELQEKGRIGRILVKLQRRGNKAVGEIYVPSNLDRVETALVAAMLESVDKVGPYPARISVVEIIDVRAEKIKKIIERAKEILKKWSQEKSVDIREILKEISETTKKSQLIEYGPEKLPAGPGVERSDTIIIVEGRADVLNLLRYGYDNVIALGGATTKVPETIKKLAKEKIAIAFVDGDRGGLMVLKNLLSQADIDYVARAPPGKEVEDLTAREIAKSLSNLIPASKMKEELLKVEKLQKEEVKEVAEKAEKVEAEEVVKKEEVAERGEEMESKAEGAEQPTATALEKAAAKEEVKQEVKTEEEKVKEYVMFIPDSVFEKAKEITGTLRSVLYDSQWNIVAEVPAKDVVSAIEEKGAYAVLHDGVITQRMLDVMSLKGGRLILGRRVARVSKRPKGVFVVLLS.

The 77-residue stretch at 165 to 241 (DTIIIVEGRA…DIDYVARAPP (77 aa)) folds into the Toprim domain. Mg(2+)-binding residues include Glu171, Asp215, and Asp217. The span at 299–315 (KEEVAERGEEMESKAEG) shows a compositional bias: basic and acidic residues. Residues 299 to 320 (KEEVAERGEEMESKAEGAEQPT) are disordered.

The protein belongs to the archaeal DnaG primase family. As to quaternary structure, forms a ternary complex with MCM helicase and DNA. Component of the archaeal exosome complex. Mg(2+) serves as cofactor.

The enzyme catalyses ssDNA + n NTP = ssDNA/pppN(pN)n-1 hybrid + (n-1) diphosphate.. RNA polymerase that catalyzes the synthesis of short RNA molecules used as primers for DNA polymerase during DNA replication. Also part of the exosome, which is a complex involved in RNA degradation. Acts as a poly(A)-binding protein that enhances the interaction between heteromeric, adenine-rich transcripts and the exosome. In Ignicoccus hospitalis (strain KIN4/I / DSM 18386 / JCM 14125), this protein is DNA primase DnaG.